Here is a 340-residue protein sequence, read N- to C-terminus: Heat-inducible transcription repressor HrcA (340 aa).

This sequence belongs to the HrcA family.

Negative regulator of class I heat shock genes (grpE-dnaK-dnaJ and groELS operons). Prevents heat-shock induction of these operons. The protein is Heat-inducible transcription repressor HrcA of Burkholderia cenocepacia (strain HI2424).